The primary structure comprises 260 residues: MICOS complex subunit mic25-a (260 aa).

Residues 1 to 92 (MGGSESTGRK…KPTARGVGHQ (92 aa)) are disordered. A lipid anchor (N-myristoyl glycine) is attached at Gly-2. The span at 28 to 39 (RLSDEVVNRMKD) shows a compositional bias: basic and acidic residues. Over residues 48–64 (STSTASGTTSGPTTFPS) the composition is skewed to low complexity. Residues 94 to 187 (AEEDLYRRYE…LNSIEKKNLE (94 aa)) are a coiled coil. The CHCH domain maps to 213 to 255 (DPVCMDLQSNILKCYAENKQERLNCSDLAKEYGKCVSAAQKNL). 2 consecutive short sequence motifs (cx9C motif) follow at residues 216 to 226 (CMDLQSNILKC) and 237 to 247 (CSDLAKEYGKC). 2 disulfides stabilise this stretch: Cys-216–Cys-247 and Cys-226–Cys-237.

Belongs to the MICOS complex subunit Mic19 family. Metazoan Mic25 subfamily. In terms of assembly, component of the mitochondrial contact site and cristae organizing system (MICOS) complex (also known as MINOS or MitOS complex).

It is found in the mitochondrion inner membrane. In terms of biological role, component of the MICOS complex, a large protein complex of the mitochondrial inner membrane that plays crucial roles in the maintenance of crista junctions, inner membrane architecture, and formation of contact sites to the outer membrane. This is MICOS complex subunit mic25-a (chchd6-a) from Xenopus laevis (African clawed frog).